We begin with the raw amino-acid sequence, 198 residues long: CASP-like protein 1U1 (198 aa).

Residues 1 to 30 (MSDTPVVVIPRKGYVDGHHGYHHSYHSGLN) are Cytoplasmic-facing. Residues 31–51 (LLLRLLQAFATAAAVIVMLLA) form a helical membrane-spanning segment. At 52–73 (TQTEFTRYGEVRGRWRDYPAYK) the chain is on the extracellular side. A helical transmembrane segment spans residues 74 to 94 (WFIIANAVVFVYALLATLVAC). The Cytoplasmic segment spans residues 95-117 (CALIARRGPLSYSPSAWLTFLLD). Residues 118 to 138 (FVAASALMSAASAALAVALIA) traverse the membrane as a helical segment. The Extracellular segment spans residues 139-165 (RNGQNLQGQHYWPTFCNYVTRFCDYAQ). A helical transmembrane segment spans residues 166–186 (GAIIASFCGFGLLALSTLLAA). The Cytoplasmic portion of the chain corresponds to 187-198 (SALHHLAWHRLH).

This sequence belongs to the Casparian strip membrane proteins (CASP) family. In terms of assembly, homodimer and heterodimers.

The protein resides in the cell membrane. This Physcomitrium patens (Spreading-leaved earth moss) protein is CASP-like protein 1U1.